The primary structure comprises 375 residues: DNA replication and repair protein RecF (375 aa).

Residue 34–41 (GDNGAGKT) participates in ATP binding.

This sequence belongs to the RecF family.

Its subcellular location is the cytoplasm. The RecF protein is involved in DNA metabolism; it is required for DNA replication and normal SOS inducibility. RecF binds preferentially to single-stranded, linear DNA. It also seems to bind ATP. This is DNA replication and repair protein RecF from Rhizobium rhizogenes (strain K84 / ATCC BAA-868) (Agrobacterium radiobacter).